A 63-amino-acid polypeptide reads, in one-letter code: Large ribosomal subunit protein uL29 (63 aa).

The protein belongs to the universal ribosomal protein uL29 family.

In Aggregatibacter actinomycetemcomitans (Actinobacillus actinomycetemcomitans), this protein is Large ribosomal subunit protein uL29 (rpmC).